Here is a 447-residue protein sequence, read N- to C-terminus: Tubulin beta chain (447 aa).

Residues Gln11, Glu69, Ser138, Gly142, Thr143, Gly144, Asn204, and Asn226 each contribute to the GTP site. Glu69 is a binding site for Mg(2+). The interval Gln424–Glu447 is disordered. A compositionally biased stretch (acidic residues) spans Glu432–Glu447.

The protein belongs to the tubulin family. As to quaternary structure, dimer of alpha and beta chains. A typical microtubule is a hollow water-filled tube with an outer diameter of 25 nm and an inner diameter of 15 nM. Alpha-beta heterodimers associate head-to-tail to form protofilaments running lengthwise along the microtubule wall with the beta-tubulin subunit facing the microtubule plus end conferring a structural polarity. Microtubules usually have 13 protofilaments but different protofilament numbers can be found in some organisms and specialized cells. Requires Mg(2+) as cofactor.

The protein resides in the cytoplasm. Its subcellular location is the cytoskeleton. Its function is as follows. Tubulin is the major constituent of microtubules, a cylinder consisting of laterally associated linear protofilaments composed of alpha- and beta-tubulin heterodimers. Microtubules grow by the addition of GTP-tubulin dimers to the microtubule end, where a stabilizing cap forms. Below the cap, tubulin dimers are in GDP-bound state, owing to GTPase activity of alpha-tubulin. The chain is Tubulin beta chain (TUB1) from Cochliobolus heterostrophus (Southern corn leaf blight fungus).